The following is a 190-amino-acid chain: MDVGSKEVLIENPPDYSAAPQGRFGLPCFPSSLKRLLIIVVVIVLVVVVIVGALLMGLHMSQKHTEMVLEMSLGGPEAQQRLALQERAGTTATFSIGSTGIVVYDYQRLLIAYKPAPGTCCYIMKMAPENIPSLEALTRKFQNFQVKPAVSTSKLGQEEGHNAGSASPGDLDFLGTTVSTLCGEVPLYYI.

A propeptide spanning residues 1–23 (MDVGSKEVLIENPPDYSAAPQGR) is cleaved from the precursor. Cys28 is lipidated: S-palmitoyl cysteine. Positions 59–190 (HMSQKHTEMV…LCGEVPLYYI (132 aa)) are excised as a propeptide. In terms of domain architecture, BRICHOS spans 94-190 (FSIGSTGIVV…LCGEVPLYYI (97 aa)). Cys121 and Cys182 are disulfide-bonded.

It is found in the secreted. The protein resides in the extracellular space. It localises to the surface film. In terms of biological role, pulmonary surfactant associated proteins promote alveolar stability by lowering the surface tension at the air-liquid interface in the peripheral air spaces. This chain is Surfactant protein C (SFTPC), found in Neovison vison (American mink).